Consider the following 196-residue polypeptide: Ribosome maturation factor RimP (196 aa).

This sequence belongs to the RimP family.

It is found in the cytoplasm. Functionally, required for maturation of 30S ribosomal subunits. The chain is Ribosome maturation factor RimP from Lawsonia intracellularis (strain PHE/MN1-00).